The primary structure comprises 243 residues: Carboxy-S-adenosyl-L-methionine synthase (243 aa).

Residues tyrosine 35, 68 to 70 (GCS), 92 to 93 (DN), and arginine 199 contribute to the S-adenosyl-L-methionine site.

Belongs to the class I-like SAM-binding methyltransferase superfamily. Cx-SAM synthase family. As to quaternary structure, homodimer.

The enzyme catalyses prephenate + S-adenosyl-L-methionine = carboxy-S-adenosyl-L-methionine + 3-phenylpyruvate + H2O. Its function is as follows. Catalyzes the conversion of S-adenosyl-L-methionine (SAM) to carboxy-S-adenosyl-L-methionine (Cx-SAM). This is Carboxy-S-adenosyl-L-methionine synthase from Helicobacter pylori (strain P12).